A 100-amino-acid chain; its full sequence is Tachykinin-4 (100 aa).

Positions 1-19 (MPSSVTLLLLMGLSVCTSA) are cleaved as a signal peptide. Propeptides lie at residues 20 to 55 (EDGG…LQEV) and 85 to 100 (RASS…QGAE). Residues 80–100 (GLLGRRASSTKGSVDEDQGAE) are disordered.

This sequence belongs to the tachykinin family.

It localises to the secreted. Its function is as follows. Tachykinins are active peptides which excite neurons, evoke behavioral responses, are potent vasodilators and secretagogues, and contract (directly or indirectly) many smooth muscles. The polypeptide is Tachykinin-4 (Oryctolagus cuniculus (Rabbit)).